The following is a 1072-amino-acid chain: Carbamoyl phosphate synthase large chain (1072 aa).

Residues 1 to 401 (MPKRLDINTI…SLLKAVRSLE (401 aa)) are carboxyphosphate synthetic domain. ATP is bound by residues Arg-129, Arg-169, Gly-175, Gly-176, Lys-208, Ile-210, Glu-215, Gly-241, Val-242, His-243, Gln-284, and Glu-298. One can recognise an ATP-grasp 1 domain in the interval 133-327 (RTLMQELNEP…IAKLAAKIAV (195 aa)). Gln-284, Glu-298, and Asn-300 together coordinate Mg(2+). 3 residues coordinate Mn(2+): Gln-284, Glu-298, and Asn-300. Residues 402–546 (LGIYHLELDH…YSTYADENES (145 aa)) are oligomerization domain. The segment at 547 to 929 (IVTDRKSVVV…ALYKGLVASG (383 aa)) is carbamoyl phosphate synthetic domain. Positions 671-861 (EAALTKLGIP…MANVATKVIL (191 aa)) constitute an ATP-grasp 2 domain. Arg-707, Arg-746, Glu-752, Gly-777, Val-778, His-779, Ser-780, Gln-820, and Glu-832 together coordinate ATP. Mg(2+) contacts are provided by Gln-820, Glu-832, and Asn-834. 3 residues coordinate Mn(2+): Gln-820, Glu-832, and Asn-834. The MGS-like domain maps to 930–1072 (INIPTHGSVI…QTKRHEVVHA (143 aa)). The interval 930-1072 (INIPTHGSVI…QTKRHEVVHA (143 aa)) is allosteric domain.

This sequence belongs to the CarB family. Composed of two chains; the small (or glutamine) chain promotes the hydrolysis of glutamine to ammonia, which is used by the large (or ammonia) chain to synthesize carbamoyl phosphate. Tetramer of heterodimers (alpha,beta)4. The cofactor is Mg(2+). Requires Mn(2+) as cofactor.

The enzyme catalyses hydrogencarbonate + L-glutamine + 2 ATP + H2O = carbamoyl phosphate + L-glutamate + 2 ADP + phosphate + 2 H(+). The catalysed reaction is hydrogencarbonate + NH4(+) + 2 ATP = carbamoyl phosphate + 2 ADP + phosphate + 2 H(+). The protein operates within amino-acid biosynthesis; L-arginine biosynthesis; carbamoyl phosphate from bicarbonate: step 1/1. It participates in pyrimidine metabolism; UMP biosynthesis via de novo pathway; (S)-dihydroorotate from bicarbonate: step 1/3. Large subunit of the glutamine-dependent carbamoyl phosphate synthetase (CPSase). CPSase catalyzes the formation of carbamoyl phosphate from the ammonia moiety of glutamine, carbonate, and phosphate donated by ATP, constituting the first step of 2 biosynthetic pathways, one leading to arginine and/or urea and the other to pyrimidine nucleotides. The large subunit (synthetase) binds the substrates ammonia (free or transferred from glutamine from the small subunit), hydrogencarbonate and ATP and carries out an ATP-coupled ligase reaction, activating hydrogencarbonate by forming carboxy phosphate which reacts with ammonia to form carbamoyl phosphate. This chain is Carbamoyl phosphate synthase large chain, found in Bacillus thuringiensis subsp. konkukian (strain 97-27).